A 240-amino-acid polypeptide reads, in one-letter code: Large ribosomal subunit protein bL25 (240 aa).

2 disordered regions span residues 1 to 21 and 204 to 240; these read MAEN…PARR and GAAP…KAKK. Residues 204–229 show a composition bias toward low complexity; that stretch reads GAAPAAGAAAPAGGAAPAAGAAPAKG. Positions 230–240 are enriched in basic and acidic residues; sequence GEAKGGDKAKK.

Belongs to the bacterial ribosomal protein bL25 family. CTC subfamily. In terms of assembly, part of the 50S ribosomal subunit; part of the 5S rRNA/L5/L18/L25 subcomplex. Contacts the 5S rRNA. Binds to the 5S rRNA independently of L5 and L18.

Functionally, this is one of the proteins that binds to the 5S RNA in the ribosome where it forms part of the central protuberance. This chain is Large ribosomal subunit protein bL25, found in Anaeromyxobacter dehalogenans (strain 2CP-1 / ATCC BAA-258).